The primary structure comprises 1157 residues: ATP-dependent helicase/deoxyribonuclease subunit B (1157 aa).

Positions 1–277 (MTLQIIAGKS…KLFLENKRAK (277 aa)) constitute a UvrD-like helicase ATP-binding domain. 8-15 (GKSGTGKT) serves as a coordination point for ATP. Residues 272 to 578 (ENKRAKSDSL…EFSLLPPSLD (307 aa)) enclose the UvrD-like helicase C-terminal domain. The [4Fe-4S] cluster site is built by C794, C1115, C1118, and C1124.

Belongs to the helicase family. AddB/RexB type 1 subfamily. Heterodimer of AddA and AddB. The cofactor is Mg(2+). It depends on [4Fe-4S] cluster as a cofactor.

Functionally, the heterodimer acts as both an ATP-dependent DNA helicase and an ATP-dependent, dual-direction single-stranded exonuclease. Recognizes the chi site generating a DNA molecule suitable for the initiation of homologous recombination. The AddB subunit has 5' -&gt; 3' nuclease activity but not helicase activity. This chain is ATP-dependent helicase/deoxyribonuclease subunit B, found in Listeria welshimeri serovar 6b (strain ATCC 35897 / DSM 20650 / CCUG 15529 / CIP 8149 / NCTC 11857 / SLCC 5334 / V8).